The sequence spans 807 residues: Ribosome biogenesis protein ERB1 (807 aa).

The disordered stretch occupies residues 1 to 112 (MMAKNNKTTE…DTTSLTDRLS (112 aa)). Composition is skewed to acidic residues over residues 21-30 (EESDVEEDED) and 42-56 (EASESDEDDDEYESA). Residue Ser23 is modified to Phosphoserine. A compositionally biased stretch (basic and acidic residues) spans 57–69 (VEEKESSSDKEAQ). A phosphoserine mark is found at Ser72 and Ser76. Over residues 86-102 (EEEGDEEEDYDSSEFSD) the composition is skewed to acidic residues. Residue Lys127 forms a Glycyl lysine isopeptide (Lys-Gly) (interchain with G-Cter in ubiquitin) linkage. A phosphoserine mark is found at Ser146 and Ser149. Residues 265 to 383 (RFVPSKNEAK…LRKVPGYGES (119 aa)) form a required for interaction with NOP7 region. A required for interaction with YTM1 region spans residues 383–419 (SIRERFERSLDLYLAPRVRKNKLNIDPNSLIPELPSP). Ser418 carries the phosphoserine modification. 7 WD repeats span residues 435–474 (GHKGKVRTLSIDPSGLWLATGSDDGTVRVWEILTGREVYR), 483–523 (NPDD…YDIE), 592–634 (SCKK…TQSP), 637–675 (KSKGIIMDAKFHPFKPQLFVCSQRYVRIYDLSQQILVKK), 678–717 (PGARWLSKIDIHPRGDNLIASSFDKRVLWHDLDLASTPYK), 721–760 (YHEKAVRSVNFHKKLPLFSSAADDGTIHVFHATVYDDMMK), and 776–807 (INSLGVLDAIWHPREAWLFSAGADNTARLWTT).

Belongs to the WD repeat BOP1/ERB1 family. As to quaternary structure, component of the NOP7 complex, composed of ERB1, NOP7 and YTM1. The complex is held together by ERB1, which interacts with NOP7 via its N-terminal domain and with YTM1 via a high-affinity interaction between the seven-bladed beta-propeller domains of the 2 proteins. The NOP7 complex associates with the 66S pre-ribosome.

The protein localises to the nucleus. Its subcellular location is the nucleolus. It is found in the nucleoplasm. Its function is as follows. Component of the NOP7 complex, which is required for maturation of the 25S and 5.8S ribosomal RNAs and formation of the 60S ribosome. In Saccharomyces cerevisiae (strain YJM789) (Baker's yeast), this protein is Ribosome biogenesis protein ERB1.